We begin with the raw amino-acid sequence, 562 residues long: Adenylate kinase isoenzyme 5 (562 aa).

Adenylate kinase regions lie at residues 133–316 (KIIL…MAVD) and 377–559 (KIIF…TAID). An ATP-binding site is contributed by 142 to 147 (GSGKGT). The tract at residues 162–193 (SVGELLRKKIHSTSSNRKWSLIAKIITTGELA) is NMP 1. Residues Arg168, 191-193 (ELA), 219-222 (GFPR), and Gln226 contribute to the AMP site. Residues 256 to 266 (KRAEQQGRPDD) form an LID 1 region. An ATP-binding site is contributed by Arg257. Arg263 and Arg274 together coordinate AMP. 386–391 (GSGKGT) contacts ATP. Positions 406–435 (STDELLQNELSSESGRSKLIRDIMERGELV) are NMP 2. AMP-binding positions include Thr407, 433–435 (ELV), 462–465 (GYPR), and Gln469. An LID 2 region spans residues 499–509 (QRSRNSPQADD). Arg500 is a binding site for ATP. Residue Arg517 participates in AMP binding. Gly545 lines the ATP pocket.

The protein belongs to the adenylate kinase family. As to quaternary structure, monomer.

The protein resides in the cytoplasm. It carries out the reaction AMP + ATP = 2 ADP. The catalysed reaction is a 2'-deoxyribonucleoside 5'-diphosphate + ATP = a 2'-deoxyribonucleoside 5'-triphosphate + ADP. The enzyme catalyses a ribonucleoside 5'-diphosphate + ATP = a ribonucleoside 5'-triphosphate + ADP. Functionally, nucleoside monophosphate (NMP) kinase that catalyzes the reversible transfer of the terminal phosphate group between nucleoside triphosphates and monophosphates. Active on AMP and dAMP with ATP as a donor. When GTP is used as phosphate donor, the enzyme phosphorylates AMP, CMP, and to a small extent dCMP. Also displays broad nucleoside diphosphate kinase activity. In Bos taurus (Bovine), this protein is Adenylate kinase isoenzyme 5 (Ak5).